The following is a 273-amino-acid chain: Formamidopyrimidine-DNA glycosylase (273 aa).

The active-site Schiff-base intermediate with DNA is the Pro2. Glu3 functions as the Proton donor in the catalytic mechanism. Lys57 acts as the Proton donor; for beta-elimination activity in catalysis. 3 residues coordinate DNA: His91, Arg110, and Lys151. Residues 236–270 form an FPG-type zinc finger; sequence QVYGRKDEACNDCGTIIEAKVIGQRNSYFCPHCQM. Arg260 serves as the catalytic Proton donor; for delta-elimination activity.

This sequence belongs to the FPG family. As to quaternary structure, monomer. Requires Zn(2+) as cofactor.

It carries out the reaction Hydrolysis of DNA containing ring-opened 7-methylguanine residues, releasing 2,6-diamino-4-hydroxy-5-(N-methyl)formamidopyrimidine.. It catalyses the reaction 2'-deoxyribonucleotide-(2'-deoxyribose 5'-phosphate)-2'-deoxyribonucleotide-DNA = a 3'-end 2'-deoxyribonucleotide-(2,3-dehydro-2,3-deoxyribose 5'-phosphate)-DNA + a 5'-end 5'-phospho-2'-deoxyribonucleoside-DNA + H(+). Functionally, involved in base excision repair of DNA damaged by oxidation or by mutagenic agents. Acts as a DNA glycosylase that recognizes and removes damaged bases. Has a preference for oxidized purines, such as 7,8-dihydro-8-oxoguanine (8-oxoG). Has AP (apurinic/apyrimidinic) lyase activity and introduces nicks in the DNA strand. Cleaves the DNA backbone by beta-delta elimination to generate a single-strand break at the site of the removed base with both 3'- and 5'-phosphates. This chain is Formamidopyrimidine-DNA glycosylase, found in Actinobacillus pleuropneumoniae serotype 3 (strain JL03).